A 72-amino-acid chain; its full sequence is Translation initiation factor IF-1 (72 aa).

Residues 1-72 (MAKDDVIQMQ…SRARIVFRAK (72 aa)) form the S1-like domain.

It belongs to the IF-1 family. In terms of assembly, component of the 30S ribosomal translation pre-initiation complex which assembles on the 30S ribosome in the order IF-2 and IF-3, IF-1 and N-formylmethionyl-tRNA(fMet); mRNA recruitment can occur at any time during PIC assembly.

The protein localises to the cytoplasm. Its function is as follows. One of the essential components for the initiation of protein synthesis. Stabilizes the binding of IF-2 and IF-3 on the 30S subunit to which N-formylmethionyl-tRNA(fMet) subsequently binds. Helps modulate mRNA selection, yielding the 30S pre-initiation complex (PIC). Upon addition of the 50S ribosomal subunit IF-1, IF-2 and IF-3 are released leaving the mature 70S translation initiation complex. In Burkholderia thailandensis (strain ATCC 700388 / DSM 13276 / CCUG 48851 / CIP 106301 / E264), this protein is Translation initiation factor IF-1.